A 166-amino-acid polypeptide reads, in one-letter code: PTS system glucose-specific EIIA component (166 aa).

The region spanning 34 to 138 (DPVFAQKMMG…SIISPIIITN (105 aa)) is the PTS EIIA type-1 domain. His71 and His86 together coordinate Zn(2+). His86 functions as the Tele-phosphohistidine intermediate; for EIIA activity in the catalytic mechanism. His86 carries the phosphohistidine; by HPr modification.

In terms of assembly, heterodimer with glycerol kinase (glpk). Zn(2+) is required as a cofactor.

It is found in the cytoplasm. Functionally, the phosphoenolpyruvate-dependent sugar phosphotransferase system (sugar PTS), a major carbohydrate active transport system, catalyzes the phosphorylation of incoming sugar substrates concomitantly with their translocation across the cell membrane. The enzyme II complex composed of PtsG and Crr is involved in glucose transport. The protein is PTS system glucose-specific EIIA component (crr) of Staphylococcus epidermidis (strain ATCC 35984 / DSM 28319 / BCRC 17069 / CCUG 31568 / BM 3577 / RP62A).